We begin with the raw amino-acid sequence, 124 residues long: MRHYEIVFIVHPDQSEQVPAMIDRYKATLAAAGGKIHRIEDWGRRQMAYMIDKLAKAHYVCMNIECDQKTLEELEHAFKFNDAVLRHLIIKTKKAETEPSIMMKEVQREEARKSAQSDAPAVAA.

The disordered stretch occupies residues 101–124 (IMMKEVQREEARKSAQSDAPAVAA). Residues 105 to 115 (EVQREEARKSA) show a composition bias toward basic and acidic residues.

Belongs to the bacterial ribosomal protein bS6 family.

In terms of biological role, binds together with bS18 to 16S ribosomal RNA. This is Small ribosomal subunit protein bS6 from Polynucleobacter asymbioticus (strain DSM 18221 / CIP 109841 / QLW-P1DMWA-1) (Polynucleobacter necessarius subsp. asymbioticus).